The chain runs to 552 residues: Kumamolisin (552 aa).

Residues 1–17 show a composition bias toward basic and acidic residues; sequence MSDMEKPWKEEEKREVL. The interval 1–34 is disordered; that stretch reads MSDMEKPWKEEEKREVLAGHARRQAPQAVDKGPV. Positions 193–546 constitute a Peptidase S53 domain; that stretch reads AYTPLDVAQA…IRLLQALLPS (354 aa). Residues E266, D270, and S466 each act as charge relay system in the active site. Ca(2+)-binding residues include D504, I505, G522, G524, and D526.

In terms of assembly, forms monomeric and dimeric crystals. Ca(2+) is required as a cofactor. Post-translationally, autocatalytically processed.

The protein resides in the secreted. It catalyses the reaction The enzyme preferentially hydrolyzes peptides having an Ala or Pro residue at P2 position and prefers such charged amino acid residues as Glu or Arg at the P2' position. In the oxidized insulin B chain, kumamolysin preferentially cleaves between Leu(15) and Tyr(16).. With respect to regulation, inactivated at 22.4 and 37 degrees Celsius, but not at 60 degrees Celsius, by aldehyde-type inhibitors such as acetyl-Ile-Ala-Phe-CHO and acetyl-Ile-Pro-Phe-CHO. Insensitive to the known carboxyl proteinase inhibitors pepstatin, diazoacetyl-DL-norleucine methyl ester (DAN) and 1,2-epoxy-3-(p-nitrophenoxy)propane (EPNP). Not inhibited by Ala-Ala-Phe-chloromethylketone, an inhibitor of the human tripeptidyl-peptidase 1. Thermostable pepstatin-insensitive serine-carboxyl proteinase. Preferentially hydrolyzes synthetic peptides having an Ala or Pro residue at the P2 position and charged amino acids such as Glu or Arg at the P2' position. In vitro, specifically hydrolyzes the Leu-15-Tyr-16 peptide bond in oxidized insulin B-chain. Additional cleavage of oxidized insulin B-chain at Phe-25-Tyr-26 is detected at a considerably lower rate. Can hydrolyze collagen and the chromogenic substrate azocoll. Shows lower activity with albumin and casein. Shows very weak tripeptidyl peptidase activity. The protein is Kumamolisin of Bacillus sp. (strain MN-32).